The following is a 464-amino-acid chain: Putative guanine nucleotide-binding protein subunit alpha (464 aa).

A G-alpha domain is found at 33 to 415 (HSKLKRGDGP…ETKRDKYNEK (383 aa)). The G1 motif stretch occupies residues 36 to 49 (LKRGDGPGESGKST). Residues 41-48 (GPGESGKS), 147-151 (DVGGQ), 214-220 (LRSRTKT), 239-243 (DVGGQ), 268-271 (RNRD), and 310-313 (TSQS) contribute to the GTP site. Serine 48 provides a ligand contact to Mg(2+). Residues 212-220 (DVLRSRTKT) form a G2 motif region. Threonine 220 contacts Mg(2+). The tract at residues 235–244 (FRMVDVGGQR) is G3 motif. The G4 motif stretch occupies residues 306–313 (VMFLTSQS). The tract at residues 382 to 387 (GYSGTC) is G5 motif.

In the N-terminal section; belongs to the G-alpha family. This sequence in the C-terminal section; belongs to the class-II aminoacyl-tRNA synthetase family. G proteins are composed of 3 units; alpha, beta and gamma. The alpha chain contains the guanine nucleotide binding site.

Its function is as follows. Guanine nucleotide-binding proteins (G proteins) are involved as modulators or transducers in various transmembrane signaling systems. This is Putative guanine nucleotide-binding protein subunit alpha from Leishmania donovani.